A 174-amino-acid chain; its full sequence is F-box protein At1g70360 (174 aa).

Positions 136–174 (PPCFISLPRELKHKILESLPGVDIGTLACVSSELRDMAS) constitute an F-box domain.

The sequence is that of F-box protein At1g70360 from Arabidopsis thaliana (Mouse-ear cress).